The sequence spans 1216 residues: SPOC domain-containing protein 1 (1216 aa).

Disordered stretches follow at residues 1–74 (MSQA…RAAG), 166–216 (EARD…GAHS), 236–325 (NLLS…PPQS), 348–462 (RTGS…PRLE), and 511–601 (SSPS…QQEK). The segment covering 36-50 (PGLSPDGPGASSGPG) has biased composition (low complexity). Positions 177-190 (CDRRSPTLSKEEPP) are enriched in basic and acidic residues. Positions 204 to 213 (RVRKKWRRQG) are enriched in basic residues. A compositionally biased stretch (gly residues) spans 266–278 (SGPGEPGGSGAGC). Residues 314–325 (SLSSAAQAPPQS) are compositionally biased toward low complexity. The segment covering 436 to 452 (RGTDRSSDNSHQDRPEE) has biased composition (basic and acidic residues). Over residues 581-592 (EAEEDSLPEQPE) the composition is skewed to acidic residues. Positions 608–728 (VRGTVVRSMQ…IIEQQQKEPC (121 aa)) constitute a TFIIS central domain. Residues 823–850 (QTPMPAPEMPKTRELSPTEPQDRVPPSG) form a disordered region. A compositionally biased stretch (basic and acidic residues) spans 832–844 (PKTRELSPTEPQD). The SPOC domain occupies 867–970 (WEGVLDMFSI…VEHMGMVLLP (104 aa)). Residues 1046–1055 (RYYQPDDRRP) are compositionally biased toward basic and acidic residues. 2 disordered regions span residues 1046-1140 (RYYQ…QHFH) and 1176-1216 (PRPL…PRKA).

As to quaternary structure, interacts with DNMT3A, DNMT3C and DNMT3L. Interacts with C19orf84. Interacts with SPIN1; promoting recruitment to transposons marked with histone H3 trimethylated at both 'Lys-4' and 'Lys-9' (H3K4me3K9me3).

Its subcellular location is the nucleus. It localises to the chromosome. Functionally, protein adapter that acts as an essential executor of PIWIL4-piRNA pathway directed transposon DNA methylation and silencing in the male embryonic germ cells. Recruited to young transposons, which are specifically marked with histone H3 trimethylated at both 'Lys-4' and 'Lys-9' (H3K4me3K9me3), via its association with SPIN1 chromatin reader, and associates with the de novo DNA methylation machinery and repressive chromatin remodeling complexes. Following this, PIWIL4 engages with nascent transposable element transcript to direct piRNA-directed DNA methylation. Not required for piRNA biosynthesis. The protein is SPOC domain-containing protein 1 of Homo sapiens (Human).